We begin with the raw amino-acid sequence, 516 residues long: Keratin, type II cuticular Hb2 (516 aa).

Residues 1 to 118 (MSCRNFQLSP…PTVQRVKRDE (118 aa)) are head. Residues 118–429 (EKEQIKCLNN…RLLEGEEHRL (312 aa)) form the IF rod domain. Residues 119–153 (KEQIKCLNNRFASFINKVRFLEQKNKLLETKWNFM) are coil 1A. Positions 154–163 (QQQRSCQSNM) are linker 1. The interval 164–264 (EPLFEGYICA…FEEEIGLLQS (101 aa)) is coil 1B. Residues 265–281 (QISETSVIVKMDNSREL) are linker 12. A coil 2 region spans residues 282–425 (DVDGIVAEIK…ATYRRLLEGE (144 aa)). Positions 426–516 (EHRLCEGIGP…VGVGSNSCSR (91 aa)) are tail.

It belongs to the intermediate filament family. In terms of assembly, heterotetramer of two type I and two type II keratins.

The polypeptide is Keratin, type II cuticular Hb2 (Krt82) (Mus musculus (Mouse)).